A 131-amino-acid chain; its full sequence is Superoxide dismutase [Ni] (131 aa).

Residues 1-14 (MLSRLFAPKVKVSA) constitute a propeptide that is removed on maturation. Ni(2+)-binding residues include His15, Cys16, and Cys20.

The protein belongs to the nickel superoxide dismutase family. In terms of assembly, homohexamer. The hexameric protein has roughly the shape of a hollow sphere with an outer diameter of 72 Angstroms and a large inner cavity. It depends on Ni(2+) as a cofactor.

Its subcellular location is the cytoplasm. The catalysed reaction is 2 superoxide + 2 H(+) = H2O2 + O2. The protein is Superoxide dismutase [Ni] (sodN) of Streptomyces seoulensis.